A 203-amino-acid chain; its full sequence is MRLALFGGSFDPPHNAHLALCLCARELLDIDKLIISVSNNPLKENRSASNAHRLAMAELLVSEINATGRIAEVSRWELERSGPSYTIDLLTRIGQLYPEEPVTLLIGEDNFRGFRQWKSWQEILERCYVVVFRRPLEHAAFDDAYAHLPGIPDRHQVRFIDFDFQLSSTAIRYAIATGEPYAHLVPPSIADYIASRHLYSERS.

Belongs to the NadD family.

It carries out the reaction nicotinate beta-D-ribonucleotide + ATP + H(+) = deamido-NAD(+) + diphosphate. It participates in cofactor biosynthesis; NAD(+) biosynthesis; deamido-NAD(+) from nicotinate D-ribonucleotide: step 1/1. Functionally, catalyzes the reversible adenylation of nicotinate mononucleotide (NaMN) to nicotinic acid adenine dinucleotide (NaAD). This Prosthecochloris aestuarii (strain DSM 271 / SK 413) protein is Probable nicotinate-nucleotide adenylyltransferase.